The chain runs to 1242 residues: MASPPESDGFSDVRKVGYLRKPKSMHKRFFVLRAASEAGGPARLEYYENEKKWRHKSSAPKRSIPLESCFNINKRADSKNKHLVALYTRDEHFAIAADSEAEQDSWYQALLQLHNRAKGHHDGAAALGAGGGGGSCSGSSGLGEAGEDLSYGDVPPGPAFKEVWQVILKPKGLGQTKNLIGIYRLCLTSKTISFVKLNSEAAAVVLQLMNIRRCGHSENFFFIEVGRSAVTGPGEFWMQVDDSVVAQNMHETILEAMRAMSDEFRPRSKSQSSSNCSNPISVPLRRHHLNNPPPSQVGLTRRSRTESITATSPASMVGGKPGSFRVRASSDGEGTMSRPASVDGSPVSPSTNRTHAHRHRGSARLHPPLNHSRSIPMPASRCSPSATSPVSLSSSSTSGHGSTSDCLFPRRSSASVSGSPSDGGFISSDEYGSSPCDFRSSFRSVTPDSLGHTPPARGEEELSNYICMGGKGPSTLTAPNGHYILSRGGNGHRCTPGTGLGTSPALAGDEAASAADLDNRFRKRTHSAGTSPTITHQKTPSQSSVASIEEYTEMMPAYPPGGGSGGRLPGHRHSAFVPTRSYPEEGLEMHPLERRGGHHRPDSSTLHTDDGYMPMSPGVAPVPSGRKGSGDYMPMSPKSVSAPQQIINPIRRHPQRVDPNGYMMMSPSGGCSPDIGGGPSSSSSSSNAVPSGTSYGKLWTNGVGGHHSHVLPHPKPPVESSGGKLLPCTGDYMNMSPVGDSNTSSPSDCYYGPEDPQHKPVLSYYSLPRSFKHTQRPGEPEEGARHQHLRLSTSSGRLLYAATADDSSSSTSSDSLGGGYCGARLEPSLPHPHHQVLQPHLPRKVDTAAQTNSRLARPTRLSLGDPKASTLPRAREQQQQQQPLLHPPEPKSPGEYVNIEFGSDQSGYLSGPVAFHSSPSVRCPSQLQPAPREEETGTEEYMKMDLGPGRRAAWQESTGVEMGRLGPAPPGAASICRPTRAVPSSRGDYMTMQMSCPRQSYVDTSPAAPVSYADMRTGIAAEEVSLPRATMAAASSSSAASASPTGPQGAAELAAHSSLLGGPQGPGGMSAFTRVNLSPNRNQSAKVIRADPQGCRRRHSSETFSSTPSATRVGNTVPFGAGAAVGGGGGSSSSSEDVKRHSSASFENVWLRPGELGGAPKEPAKLCGAAGGLENGLNYIDLDLVKDFKQCPQECTPEPQPPPPPPPHQPLGSGESSSTRRSSEDLSAYASISFQKQPEDRQ.

Ser3 is subject to Phosphoserine. The segment at 3 to 137 (SPPESDGFSD…GAGGGGGSCS (135 aa)) is mediates interaction with PHIP. The region spanning 12-115 (DVRKVGYLRK…WYQALLQLHN (104 aa)) is the PH domain. Ser99 bears the Phosphoserine; by CK2 mark. In terms of domain architecture, IRS-type PTB spans 160-264 (FKEVWQVILK…EAMRAMSDEF (105 aa)). The disordered stretch occupies residues 262–430 (DEFRPRSKSQ…SDGGFISSDE (169 aa)). The segment covering 269–281 (KSQSSSNCSNPIS) has biased composition (low complexity). 2 positions are modified to phosphoserine; by RPS6KB1: Ser270 and Ser307. Position 312 is a phosphoserine; by IKKB, MAPK8 and RPS6KB1 (Ser312). A phosphoserine mark is found at Ser315, Ser323, Ser330, Ser345, and Ser348. A compositionally biased stretch (basic residues) spans 354–363 (THAHRHRGSA). Composition is skewed to low complexity over residues 383–404 (SPSATSPVSLSSSSTSGHGSTS) and 412–424 (SSASVSGSPSDGG). Ser419 is modified (phosphoserine). 2 positions are modified to phosphothreonine: Thr446 and Thr453. Tyr465 is modified (phosphotyrosine; by INSR). Positions 465–468 (YICM) match the YXXM motif 1 motif. At Ser527 the chain carries Phosphoserine; by RPS6KB1. Residues 551-554 (YTEM) carry the YXXM motif 2 motif. A compositionally biased stretch (basic and acidic residues) spans 592 to 610 (LERRGGHHRPDSSTLHTDD). The segment at 592-616 (LERRGGHHRPDSSTLHTDDGYMPMS) is disordered. Residue Tyr612 is modified to Phosphotyrosine; by INSR. Positions 612-615 (YMPM) match the YXXM motif 3 motif. Phosphoserine is present on residues Ser616 and Ser629. Tyr632 bears the Phosphotyrosine; by INSR mark. The YXXM motif 4 motif lies at 632–635 (YMPM). Ser636 bears the Phosphoserine; by RPS6KB1 mark. Tyr662 bears the Phosphotyrosine mark. Positions 662–665 (YMMM) match the YXXM motif 5 motif. Residues 668 to 693 (SGGCSPDIGGGPSSSSSSSNAVPSGT) are disordered. The YXXM motif 6 motif lies at 732-735 (YMNM). Disordered stretches follow at residues 771 to 900 (FKHT…VNIE) and 918 to 937 (SPSVRCPSQLQPAPREEETG). The segment covering 776–785 (RPGEPEEGAR) has biased composition (basic and acidic residues). Ser794 carries the post-translational modification Phosphoserine; by AMPK and SIK2. The span at 801–815 (AATADDSSSSTSSDS) shows a compositional bias: low complexity. Ser892 bears the Phosphoserine mark. A Phosphotyrosine; by INSR modification is found at Tyr896. The interval 896 to 898 (YVN) is GRB2-binding. The segment covering 918–928 (SPSVRCPSQLQ) has biased composition (polar residues). A phosphotyrosine; by INSR mark is found at Tyr941 and Tyr989. 3 short sequence motifs (YXXM motif) span residues 941 to 944 (YMKM), 989 to 992 (YMTM), and 1012 to 1015 (YADM). Residues 1057-1146 (SSLLGGPQGP…DVKRHSSASF (90 aa)) form a disordered region. A compositionally biased stretch (polar residues) spans 1073 to 1085 (TRVNLSPNRNQSA). Ser1100 bears the Phosphoserine mark. At Ser1101 the chain carries Phosphoserine; by RPS6KB1 and PKC/PRKCQ. The segment covering 1102 to 1114 (ETFSSTPSATRVG) has biased composition (polar residues). Tyr1179 is modified (phosphotyrosine; by INSR). Residues Lys1186 and Lys1189 each participate in a glycyl lysine isopeptide (Lys-Gly) (interchain with G-Cter in ubiquitin) cross-link. The disordered stretch occupies residues 1190 to 1242 (QCPQECTPEPQPPPPPPPHQPLGSGESSSTRRSSEDLSAYASISFQKQPEDRQ). Residues 1198–1209 (EPQPPPPPPPHQ) are compositionally biased toward pro residues. Residues 1210–1220 (PLGSGESSSTR) show a composition bias toward low complexity. Phosphotyrosine; by INSR is present on Tyr1229.

As to quaternary structure, interacts with UBTF and PIK3CA. Interacts (via phosphorylated YXXM motifs) with PIK3R1. Interacts with ROCK1 and FER. Interacts (via PH domain) with PHIP. Interacts with GRB2. Interacts with SOCS7. Interacts (via IRS-type PTB domain) with IGF1R and INSR (via the tyrosine-phosphorylated NPXY motif). Interacts with ALK. Interacts with EIF2AK2/PKR. Interacts with GKAP1. Interacts with DGKZ in the absence of insulin; insulin stimulation decreases this interaction. Found in a ternary complex with DGKZ and PIP5K1A in the absence of insulin stimulation. Interacts with SQSTM1; the interaction is disrupted by the presence of tensin TNS2. Interacts with NCK1 (via SH2 domain). Interacts with NCK2 (via SH3 domain). Interacts with SH2B1; this interaction enhances leptin-induced activation of the PI3-kinase pathway. Interacts with DVL2; this interaction promotes the Wnt/beta-catenin signaling pathway. Post-translationally, serine phosphorylation of IRS1 is a mechanism for insulin resistance. Ser-307, Ser-312, Ser-315, and Ser-323 phosphorylations inhibit insulin action through disruption of IRS1 interaction with the insulin receptor INSR. Phosphorylation of Tyr-896 is required for GRB2-binding. Phosphorylated by ALK. Phosphorylated at Ser-270, Ser-307, Ser-636 and Ser-1101 by RPS6KB1; phosphorylation induces accelerated degradation of IRS1. Phosphorylated on tyrosine residues in response to insulin. In skeletal muscles, dephosphorylated on Tyr-612 by TNS2 under anabolic conditions; dephosphorylation results in the proteasomal degradation of IRS1. In terms of processing, ubiquitinated by the Cul7-RING(FBXW8) complex in a mTOR-dependent manner, leading to its degradation: the Cul7-RING(FBXW8) complex recognizes and binds IRS1 previously phosphorylated by S6 kinase (RPS6KB1 or RPS6KB2). Ubiquitinated by TRAF4 through 'Lys-29' linkage; this ubiquitination regulates the interaction of IRS1 with IGFR and IRS1 tyrosine phosphorylation upon IGF1 stimulation. S-nitrosylation at by BLVRB inhibits its activity.

It localises to the cytoplasm. Its subcellular location is the nucleus. In terms of biological role, signaling adapter protein that participates in the signal transduction from two prominent receptor tyrosine kinases, insulin receptor/INSR and insulin-like growth factor I receptor/IGF1R. Plays therefore an important role in development, growth, glucose homeostasis as well as lipid metabolism. Upon phosphorylation by the insulin receptor, functions as a signaling scaffold that propagates insulin action through binding to SH2 domain-containing proteins including the p85 regulatory subunit of PI3K, NCK1, NCK2, GRB2 or SHP2. Recruitment of GRB2 leads to the activation of the guanine nucleotide exchange factor SOS1 which in turn triggers the Ras/Raf/MEK/MAPK signaling cascade. Activation of the PI3K/AKT pathway is responsible for most of insulin metabolic effects in the cell, and the Ras/Raf/MEK/MAPK is involved in the regulation of gene expression and in cooperation with the PI3K pathway regulates cell growth and differentiation. Acts a positive regulator of the Wnt/beta-catenin signaling pathway through suppression of DVL2 autophagy-mediated degradation leading to cell proliferation. In Homo sapiens (Human), this protein is Insulin receptor substrate 1 (IRS1).